Here is a 452-residue protein sequence, read N- to C-terminus: uncharacterized protein (452 aa).

The segment at 1 to 452 is disordered; it reads MTAVSSNRNP…LRKPEADTAL (452 aa). Polar residues-rich tracts occupy residues 29–41, 95–111, 129–144, and 163–176; these read RTGT…VSSN, SPQT…SNRN, SPQT…SSNR, and SPQT…AVSS. Residues 177-193 are compositionally biased toward basic and acidic residues; sequence NRDHEDDGCLLKQESRG. Polar residues-rich tracts occupy residues 197–212, 231–245, 265–280, 299–314, 333–347, 376–394, and 412–426; these read SPQT…SSNR, SPQT…VSSN, SPQT…VSSK, and TAVS…SNRN. Positions 439–452 are enriched in basic and acidic residues; that stretch reads EPQELRKPEADTAL.

This is an uncharacterized protein from Homo sapiens (Human).